A 148-amino-acid polypeptide reads, in one-letter code: Ubiquitin-like protein 4A (148 aa).

The Ubiquitin-like domain occupies 1-76 (MQLTVKALKG…LNLMVKEQVA (76 aa)).

In terms of assembly, component of the bag6/bat3 complex.

It localises to the cytoplasm. It is found in the cytosol. Its subcellular location is the nucleus. Functionally, as part of a cytosolic protein quality control complex, the bag6/bat3 complex, maintains misfolded and hydrophobic patches-containing proteins in a soluble state and participates in their proper delivery to the endoplasmic reticulum or alternatively can promote their sorting to the proteasome where they undergo degradation. The bag6/bat3 complex is involved in the post-translational delivery of tail-anchored/type II transmembrane proteins to the endoplasmic reticulum membrane. Similarly, the bag6/bat3 complex also functions as a sorting platform for proteins of the secretory pathway that are mislocalized to the cytosol either delivering them to the proteasome for degradation or to the endoplasmic reticulum. The bag6/bat3 complex also plays a role in the endoplasmic reticulum-associated degradation (ERAD), a quality control mechanism that eliminates unwanted proteins of the endoplasmic reticulum through their retrotranslocation to the cytosol and their targeting to the proteasome. It maintains these retrotranslocated proteins in an unfolded yet soluble state condition in the cytosol to ensure their proper delivery to the proteasome. The chain is Ubiquitin-like protein 4A (ubl4a) from Xenopus tropicalis (Western clawed frog).